A 949-amino-acid polypeptide reads, in one-letter code: Serine/threonine-protein kinase KIPK2 (949 aa).

Disordered regions lie at residues Leu79–Ser116, Thr323–Ser344, Ser407–Val426, and Ser495–Ser525. A compositionally biased stretch (low complexity) spans Thr81–Ser94. 2 stretches are compositionally biased toward polar residues: residues Ser407–His420 and Ser495–Tyr512. Residues Ser513–Ser525 are compositionally biased toward low complexity. The Protein kinase domain occupies Phe559 to Phe898. ATP is bound by residues Leu565–Val573 and Lys588. Asp684 (proton acceptor) is an active-site residue.

The protein belongs to the protein kinase superfamily. Ser/Thr protein kinase family. Interacts with KCBP, PERK8, PERK9, PERK10 and PERK13.

The enzyme catalyses L-seryl-[protein] + ATP = O-phospho-L-seryl-[protein] + ADP + H(+). The catalysed reaction is L-threonyl-[protein] + ATP = O-phospho-L-threonyl-[protein] + ADP + H(+). In terms of biological role, serine/threonine-protein kinase that could be involved in the negative regulation of root growth. This Arabidopsis thaliana (Mouse-ear cress) protein is Serine/threonine-protein kinase KIPK2.